A 302-amino-acid chain; its full sequence is Deoxyhypusine hydroxylase-B (302 aa).

5 HEAT-like PBS-type repeats span residues 49 to 75 (LAHEAAFALGQMQDAEAIPALEAVLKD), 82 to 108 (VRHEAAEALGAIGLEKSISLLEESLAV), 171 to 200 (MYERYAALFALRNDSGDAAVSAIVAALGVK), 204 to 230 (LRHEVAYVLGQLQNKAASDALSTVLKN), and 237 to 263 (VRHEAAEALGSIADQESIALLEEFAKD). Positions 51, 52, 84, and 85 each coordinate Fe cation. Fe cation is bound by residues histidine 206, glutamate 207, histidine 239, and glutamate 240.

The protein belongs to the deoxyhypusine hydroxylase family. Requires Fe(2+) as cofactor.

It catalyses the reaction [eIF5A protein]-deoxyhypusine + AH2 + O2 = [eIF5A protein]-hypusine + A + H2O. The protein operates within protein modification; eIF5A hypusination. Catalyzes the hydroxylation of the N(6)-(4-aminobutyl)-L-lysine intermediate to form hypusine, an essential post-translational modification only found in mature eIF-5A factor. The chain is Deoxyhypusine hydroxylase-B from Oryza sativa subsp. japonica (Rice).